Here is a 449-residue protein sequence, read N- to C-terminus: AP-4 complex subunit mu-1 (449 aa).

The MHD domain maps to 184 to 448 (KNEVFLDVVE…LSHSNAYVIR (265 aa)).

It belongs to the adaptor complexes medium subunit family. As to quaternary structure, adaptor protein complex 4 (AP-4) is a heterotetramer composed of two large adaptins (epsilon-type subunit AP4E1 and beta-type subunit AP4B1), a medium adaptin (mu-type subunit AP4M1) and a small adaptin (sigma-type AP4S1). Interacts with tyrosine-based sorting signals on the cytoplasmic tail of cargo proteins such as APP, ATG9A, LAMP2 and NAGPA. Interacts with the C-terminal domain of GRID2. Interacts with GRIA1 and GRIA2; the interaction is indirect via CACNG3. Interacts with CACNG3; CACNG3 associates GRIA1 and GRIA2 with the adaptor protein complex 4 (AP-4) to target them to the somatodendritic compartment of neurons. Interacts with HOOK1 and HOOK2; the interactions are direct, mediate the interaction between FTS-Hook-FHIP (FHF) complex and AP-4 and the perinuclear distribution of AP-4.

It localises to the golgi apparatus. It is found in the trans-Golgi network membrane. The protein localises to the early endosome. In terms of biological role, component of the adaptor protein complex 4 (AP-4). Adaptor protein complexes are vesicle coat components involved both in vesicle formation and cargo selection. They control the vesicular transport of proteins in different trafficking pathways. AP-4 forms a non clathrin-associated coat on vesicles departing the trans-Golgi network (TGN) and may be involved in the targeting of proteins from the trans-Golgi network (TGN) to the endosomal-lysosomal system. It is also involved in protein sorting to the basolateral membrane in epithelial cells and the proper asymmetric localization of somatodendritic proteins in neurons. Within AP-4, the mu-type subunit AP4M1 is directly involved in the recognition and binding of tyrosine-based sorting signals found in the cytoplasmic part of cargos. The adaptor protein complex 4 (AP-4) may also recognize other types of sorting signal. The chain is AP-4 complex subunit mu-1 from Mus musculus (Mouse).